Consider the following 140-residue polypeptide: Nucleoside diphosphate kinase (140 aa).

Lysine 11, phenylalanine 59, arginine 87, threonine 93, arginine 104, and asparagine 114 together coordinate ATP. The Pros-phosphohistidine intermediate role is filled by histidine 117.

This sequence belongs to the NDK family. In terms of assembly, homotetramer. Mg(2+) is required as a cofactor.

The protein localises to the cytoplasm. The enzyme catalyses a 2'-deoxyribonucleoside 5'-diphosphate + ATP = a 2'-deoxyribonucleoside 5'-triphosphate + ADP. It catalyses the reaction a ribonucleoside 5'-diphosphate + ATP = a ribonucleoside 5'-triphosphate + ADP. Its function is as follows. Major role in the synthesis of nucleoside triphosphates other than ATP. The ATP gamma phosphate is transferred to the NDP beta phosphate via a ping-pong mechanism, using a phosphorylated active-site intermediate. This is Nucleoside diphosphate kinase from Methylobacterium radiotolerans (strain ATCC 27329 / DSM 1819 / JCM 2831 / NBRC 15690 / NCIMB 10815 / 0-1).